The following is a 233-amino-acid chain: 2,3-bisphosphoglycerate-dependent phosphoglycerate mutase (233 aa).

Residues 8-15, 21-22, R60, 87-90, K98, 114-115, and 183-184 each bind substrate; these read RHGESEWN, TG, ERHY, RR, and GN. Residue H9 is the Tele-phosphohistidine intermediate of the active site. Residue E87 is the Proton donor/acceptor of the active site.

It belongs to the phosphoglycerate mutase family. BPG-dependent PGAM subfamily.

The enzyme catalyses (2R)-2-phosphoglycerate = (2R)-3-phosphoglycerate. The protein operates within carbohydrate degradation; glycolysis; pyruvate from D-glyceraldehyde 3-phosphate: step 3/5. Catalyzes the interconversion of 2-phosphoglycerate and 3-phosphoglycerate. The protein is 2,3-bisphosphoglycerate-dependent phosphoglycerate mutase of Lactococcus lactis subsp. cremoris (strain MG1363).